Consider the following 338-residue polypeptide: Arginase, mitochondrial (338 aa).

The N-terminal 15 residues, 1-15 (MSTIARRGFHYMQRL), are a transit peptide targeting the mitochondrion. L-ornithine-binding positions include Ser73 and 92–95 (DSTN). 4 residues coordinate Mn(2+): His157, Asp181, His183, and Asp185. An L-ornithine-binding site is contributed by 185-187 (DLY). 191–193 (EGN) is a substrate binding site. Position 220 (Ser220) interacts with L-ornithine. Mn(2+) is bound by residues Asp266 and Asp268. Glu309 contributes to the substrate binding site.

This sequence belongs to the arginase family. In terms of assembly, forms homohexamers. The cofactor is Mn(2+).

The protein localises to the mitochondrion. The enzyme catalyses L-arginine + H2O = urea + L-ornithine. The catalysed reaction is agmatine + H2O = urea + putrescine. It functions in the pathway nitrogen metabolism; urea cycle; L-ornithine and urea from L-arginine: step 1/1. Its pathway is amine and polyamine biosynthesis; putrescine biosynthesis via agmatine pathway; putrescine from agmatine: step 1/1. Catalyzes the hydrolysis of L-arginine to urea and L-ornithine. The latter can be utilized in the urea cycle or as a precursor for the synthesis of both polyamines and proline. Possesses agmatinase activity. Catalyzes the formation of putrescine from agmatine. This Medicago truncatula (Barrel medic) protein is Arginase, mitochondrial.